A 547-amino-acid polypeptide reads, in one-letter code: T-complex protein 1 subunit gamma (547 aa).

Gly-41 is a binding site for ADP. Gly-41 lines the ATP pocket. Asp-92 is a Mg(2+) binding site. ADP is bound by residues Gly-93, Thr-94, Thr-95, Ser-96, Thr-161, and Lys-162. ATP is bound by residues Gly-93, Thr-94, and Thr-95. Cys-365 and Cys-371 form a disulfide bridge. ADP is bound by residues Gly-410, Gly-481, Glu-482, Glu-496, and Lys-501. ATP-binding residues include Gly-410 and Gly-481. ATP is bound at residue Glu-496. A compositionally biased stretch (basic and acidic residues) spans 525–534 (HKKKGEDHGR). The tract at residues 525–547 (HKKKGEDHGRQPAAAPEAPQQAE) is disordered. Residues 535–547 (QPAAAPEAPQQAE) show a composition bias toward low complexity.

It belongs to the TCP-1 chaperonin family. As to quaternary structure, component of the chaperonin-containing T-complex (TRiC), a hexadecamer composed of two identical back-to-back stacked rings enclosing a protein folding chamber. Each ring is made up of eight different subunits: TCP1/CCT1, CCT2, CCT3, CCT4, CCT5, CCT6A/CCT6, CCT7, CCT8.

Its subcellular location is the cytoplasm. It carries out the reaction ATP + H2O = ADP + phosphate + H(+). Component of the chaperonin-containing T-complex (TRiC), a molecular chaperone complex that assists the folding of actin, tubulin and other proteins upon ATP hydrolysis. In Xenopus laevis (African clawed frog), this protein is T-complex protein 1 subunit gamma (cct3).